A 191-amino-acid chain; its full sequence is MSKINGKIAVFTVFLVLVVVYGYMQAPTNREVKIDSFLIQFENGTTEPEVKAILENYNMTLNYSIDCNSDNGGYKYYIKVDKDDMPDVVKDGLKKDKNWTDSGSPSFTKGDYVIYPVTEQAIHDKNFLEILKRHNIQVKTFVWCLVSYRDNSTRYDVLGKNCITEKDANRITNELEMNENVLIVMPEYICY.

The protein belongs to the UPF0228 family.

The chain is UPF0228 protein MM_1428 from Methanosarcina mazei (strain ATCC BAA-159 / DSM 3647 / Goe1 / Go1 / JCM 11833 / OCM 88) (Methanosarcina frisia).